Reading from the N-terminus, the 89-residue chain is Elongation factor 1-beta (89 aa).

The protein belongs to the EF-1-beta/EF-1-delta family.

Functionally, promotes the exchange of GDP for GTP in EF-1-alpha/GDP, thus allowing the regeneration of EF-1-alpha/GTP that could then be used to form the ternary complex EF-1-alpha/GTP/AAtRNA. The chain is Elongation factor 1-beta from Methanosarcina acetivorans (strain ATCC 35395 / DSM 2834 / JCM 12185 / C2A).